The chain runs to 488 residues: Photosystem II CP43 reaction center protein (488 aa).

A propeptide spanning residues 1 to 29 is cleaved from the precursor; it reads MTKVFALGWLLKINLMKTLYSLRRFYHVE. A run of 5 helical transmembrane segments spans residues 84-108, 149-170, 193-215, 270-290, and 306-327; these read LFEV…PHLA, LIGP…RDKN, KALF…RFVS, KPFA…LSYS, and WYNN…ASQA. Residue glutamate 382 coordinates [CaMn4O5] cluster. Residues 462-486 form a helical membrane-spanning segment; the sequence is RARAAAAGFEKGINRENEPVLSMRP.

The protein belongs to the PsbB/PsbC family. PsbC subfamily. In terms of assembly, PSII is composed of 1 copy each of membrane proteins PsbA, PsbB, PsbC, PsbD, PsbE, PsbF, PsbH, PsbI, PsbJ, PsbK, PsbL, PsbM, PsbT, PsbX, PsbY, PsbZ, Psb30/Ycf12, at least 3 peripheral proteins of the oxygen-evolving complex and a large number of cofactors. It forms dimeric complexes. Requires Binds multiple chlorophylls and provides some of the ligands for the Ca-4Mn-5O cluster of the oxygen-evolving complex. It may also provide a ligand for a Cl- that is required for oxygen evolution. PSII binds additional chlorophylls, carotenoids and specific lipids. as cofactor.

It localises to the plastid. It is found in the chloroplast thylakoid membrane. Functionally, one of the components of the core complex of photosystem II (PSII). It binds chlorophyll and helps catalyze the primary light-induced photochemical processes of PSII. PSII is a light-driven water:plastoquinone oxidoreductase, using light energy to abstract electrons from H(2)O, generating O(2) and a proton gradient subsequently used for ATP formation. The sequence is that of Photosystem II CP43 reaction center protein from Pyropia yezoensis (Susabi-nori).